The following is a 118-amino-acid chain: Elongin-B (118 aa).

The residue at position 1 (Met-1) is an N-acetylmethionine. Residues 1–79 enclose the Ubiquitin-like domain; the sequence is MDVFLMIRRH…QAPATVGLAF (79 aa). Residue Thr-84 is modified to Phosphothreonine. Positions 91-118 are disordered; it reads EPFSSPPELPDVMKPQDSGGSANEQAVQ. A phosphoserine mark is found at Ser-108 and Ser-111. The span at 108–118 shows a compositional bias: polar residues; it reads SGGSANEQAVQ.

Belongs to the Elongin B family. As to quaternary structure, heterotrimer of an A (ELOA, ELOA2 or ELOA3P), ELOB and ELOC subunit. The elongin BC complex interacts with EPOP; leading to recruit the elongin BC complex to Polycomb group (PcG) target genes, thereby restricting excessive activity of the PRC2/EED-EZH2 complex. Component of multiple cullin-RING E3 ubiquitin-protein ligase complexes composed of Elongin BC (ELOB and ELOC), a cullin (either CUL2 or CUL5), a catalytic subunit (either RBX1 or RNF7/RBX2), as well as a substrate adapter protein that can be either ASB2, ASB9, ASB11, KLHDC2, KLHDC3, KLHDC10, APPBP2, FEM1A, FEM1B, FEM1C, LRR1, PCMTD1, SOCS1, SOCS2, SOCS5, SPSB1, SPSB3, ELOA, VHL, WSB1 or RAB40C. As part of the Elongin BC E3 ubiquitin ligase complex; interacts with NRBP1. May also interact with DCUN1D1, DCUN1D2, DCUN1D3 and DCUN1D5. May form oligomers as a KLHDC2/KLHDC3-ELOB-ELOC complex; this interaction is autoinhibitory for the E3 ligase complex as the substrate-binding site of KLHDC2/KLHDC3 is blocked in the oligomer.

It is found in the nucleus. The protein operates within protein modification; protein ubiquitination. In terms of biological role, SIII, also known as elongin, is a general transcription elongation factor that increases the RNA polymerase II transcription elongation past template-encoded arresting sites. Subunit A is transcriptionally active and its transcription activity is strongly enhanced by binding to the dimeric complex of the SIII regulatory subunits B and C (elongin BC complex). In embryonic stem cells, the elongin BC complex is recruited by EPOP to Polycomb group (PcG) target genes in order generate genomic region that display both active and repressive chromatin properties, an important feature of pluripotent stem cells. Its function is as follows. Core component of multiple cullin-2 and cullin-5-RING E3 ubiquitin-protein ligase complexes (ECS complexes), which mediate the ubiquitination of target proteins. By binding to BC-box motifs it seems to link target recruitment subunits, like VHL and members of the SOCS box family, to Cullin/RBX1 modules that activate E2 ubiquitination enzymes. Component the von Hippel-Lindau ubiquitination complex CBC(VHL). A number of ECS complexes (containing either KLHDC2, KLHDC3, KLHDC10, APPBP2, FEM1A, FEM1B or FEM1C as substrate-recognition component) are part of the DesCEND (destruction via C-end degrons) pathway, which recognizes a C-degron located at the extreme C terminus of target proteins, leading to their ubiquitination and degradation. The ECS(ASB9) complex mediates ubiquitination and degradation of CKB. As part of a multisubunit ubiquitin ligase complex, polyubiquitinates monoubiquitinated POLR2A. ECS(LRR1) ubiquitinates MCM7 and promotes CMG replisome disassembly by VCP and chromatin extraction during S-phase. As part of the ECS(RAB40C) complex, mediates ANKRD28 ubiquitination and degradation, thereby inhibiting protein phosphatase 6 (PP6) complex activity and focal adhesion assembly during cell migration. This chain is Elongin-B, found in Mus musculus (Mouse).